We begin with the raw amino-acid sequence, 312 residues long: Olfactory receptor-like protein COR4 (312 aa).

Residues 1-26 (MASGNCTTPTTFILSGLTDNPGLQMP) lie on the Extracellular side of the membrane. The N-linked (GlcNAc...) asparagine glycan is linked to asparagine 5. Residues 27–49 (LFMVFLAIYTITLLTNLGLIALI) traverse the membrane as a helical segment. Over 50-57 (SVDLHLQT) the chain is Cytoplasmic. A helical transmembrane segment spans residues 58 to 79 (PMYIFLQNLSFTDAAYSTVITP). Topologically, residues 80–100 (KMLATFLEERKTISYIGCILQ) are extracellular. Cysteines 97 and 179 form a disulfide. A helical transmembrane segment spans residues 101-120 (YFSFVLLTVTESLLLAVMAY). Residues 121–139 (DRYVAICKPLLYPSIMTKA) are Cytoplasmic-facing. Residues 140 to 164 (VCWRLVKGLYSLAFLNSLVHTSGLL) traverse the membrane as a helical segment. At 165–205 (KLSFCSSNVVNHFFCDNSPLFQISSSSTTLNELLVFIFGSL) the chain is on the extracellular side. The chain crosses the membrane as a helical span at residues 206–226 (FAMSSIITILISYVFIILTVV). Over 227 to 239 (RIRSKDGKYKAFS) the chain is Cytoplasmic. A helical transmembrane segment spans residues 240-260 (TCTSHLMAVSLFHGTVIFMYL). The Extracellular segment spans residues 261-271 (RPVKLFSLDTD). A helical membrane pass occupies residues 272–292 (KIASLFYTVVIPMLNPLIYSW). At 293–312 (RNKEVKDALRRVIATNVWIH) the chain is on the cytoplasmic side.

It belongs to the G-protein coupled receptor 1 family.

It localises to the cell membrane. Its function is as follows. Odorant receptor. This Gallus gallus (Chicken) protein is Olfactory receptor-like protein COR4 (COR4).